A 122-amino-acid polypeptide reads, in one-letter code: Large ribosomal subunit protein uL14 (122 aa).

Belongs to the universal ribosomal protein uL14 family. Part of the 50S ribosomal subunit. Forms a cluster with proteins L3 and L19. In the 70S ribosome, L14 and L19 interact and together make contacts with the 16S rRNA in bridges B5 and B8.

Binds to 23S rRNA. Forms part of two intersubunit bridges in the 70S ribosome. This is Large ribosomal subunit protein uL14 from Marinomonas sp. (strain MWYL1).